Reading from the N-terminus, the 603-residue chain is Insulin-like growth factor-binding protein complex acid labile subunit (603 aa).

A signal peptide spans 1–23; sequence MALRTGSPALVVLLAFWVALGPC. The LRRNT domain maps to 32–74; that stretch reads ASADAEGPQCPVTCTCSYDDYTDELSVFCSSRNLTQLPDGIPV. Disulfide bonds link cysteine 41/cysteine 47 and cysteine 45/cysteine 60. Residues asparagine 64, asparagine 85, and asparagine 96 are each glycosylated (N-linked (GlcNAc...) asparagine). 19 LRR repeats span residues 75 to 96, 99 to 120, 123 to 144, 147 to 168, 171 to 192, 195 to 216, 219 to 240, 243 to 264, 267 to 288, 291 to 312, 315 to 336, 339 to 360, 363 to 384, 387 to 408, 411 to 432, 435 to 456, 459 to 480, 483 to 504, and 507 to 528; these read STRA…AFQN, SLDF…ALLG, NLYH…LFRH, SLAS…LFRG, HLWD…VFQG, NLHE…LLCG, ELRE…VFIH, RLQK…AFLG, ALRW…TFPG, GLHV…TFKD, FLEE…TFEG, QLEV…AFFG, NVAV…VFQG, RLHS…TFAG, GLRR…SLAG, ELLE…LFQG, QLEY…VLGP, RAFW…LFSS, and RLRY…PGLE. Asparagine 368 is a glycosylation site (N-linked (GlcNAc...) asparagine). N-linked (GlcNAc...) asparagine glycosylation occurs at asparagine 515. The LRRCT domain occupies 535–603; that stretch reads NPWDCSCPLK…DISETLFVHC (69 aa). Cystine bridges form between cysteine 539–cysteine 581, cysteine 541–cysteine 603, and cysteine 565–cysteine 570. Residues asparagine 578 and asparagine 586 are each glycosylated (N-linked (GlcNAc...) asparagine).

In terms of assembly, forms a ternary complex with IGF1 and IGFBP3.

It is found in the secreted. The protein resides in the extracellular space. Its function is as follows. May have an important role in regulating the access of circulating IGFs to the tissues. This is Insulin-like growth factor-binding protein complex acid labile subunit (Igfals) from Mus musculus (Mouse).